A 256-amino-acid polypeptide reads, in one-letter code: Spheroidene monooxygenase (256 aa).

Residues 1–23 (MTNELSNAAGASQQGPAASSFSA) show a composition bias toward low complexity. The disordered stretch occupies residues 1–26 (MTNELSNAAGASQQGPAASSFSADTP).

The protein belongs to the CrtA family. It depends on heme as a cofactor.

The catalysed reaction is spheroidene + 4 reduced [2Fe-2S]-[ferredoxin] + 2 O2 + 4 H(+) = spheroiden-2-one + 4 oxidized [2Fe-2S]-[ferredoxin] + 3 H2O. It carries out the reaction spirilloxanthin + 4 reduced [2Fe-2S]-[ferredoxin] + 2 O2 + 4 H(+) = 2-oxospirilloxanthin + 4 oxidized [2Fe-2S]-[ferredoxin] + 3 H2O. It catalyses the reaction 2-oxospirilloxanthin + 4 reduced [2Fe-2S]-[ferredoxin] + 2 O2 + 4 H(+) = 2,2'-dioxospirilloxanthin + 4 oxidized [2Fe-2S]-[ferredoxin] + 3 H2O. The enzyme catalyses spheroidene + 2 reduced [2Fe-2S]-[ferredoxin] + O2 + 2 H(+) = 2-hydroxyspheroidene + 2 oxidized [2Fe-2S]-[ferredoxin] + H2O. The catalysed reaction is 2-hydroxyspheroidene + 2 reduced [2Fe-2S]-[ferredoxin] + O2 + 2 H(+) = 2,2-dihydroxyspheroidene + 2 oxidized [2Fe-2S]-[ferredoxin] + H2O. It carries out the reaction 2,2-dihydroxyspheroidene = spheroiden-2-one + H2O. It catalyses the reaction spirilloxanthin + 2 reduced [2Fe-2S]-[ferredoxin] + O2 + 2 H(+) = 2-hydroxyspirilloxanthin + 2 oxidized [2Fe-2S]-[ferredoxin] + H2O. The enzyme catalyses 2-hydroxyspirilloxanthin + 2 reduced [2Fe-2S]-[ferredoxin] + O2 + 2 H(+) = 2,2-dihydroxyspirilloxanthin + 2 oxidized [2Fe-2S]-[ferredoxin] + H2O. The catalysed reaction is 2,2-dihydroxyspirilloxanthin = 2-oxospirilloxanthin + H2O. It carries out the reaction 2-oxospirilloxanthin + 2 reduced [2Fe-2S]-[ferredoxin] + O2 + 2 H(+) = 2'-hydroxy-2-oxospirilloxanthin + 2 oxidized [2Fe-2S]-[ferredoxin] + H2O. It catalyses the reaction 2'-hydroxy-2-oxospirilloxanthin + 2 reduced [2Fe-2S]-[ferredoxin] + O2 + 2 H(+) = 2',2'-dihydroxy-2-oxospirilloxanthin + 2 oxidized [2Fe-2S]-[ferredoxin] + H2O. The enzyme catalyses 2',2'-dihydroxy-2-oxospirilloxanthin = 2,2'-dioxospirilloxanthin + H2O. It functions in the pathway carotenoid biosynthesis; spheroidene biosynthesis. Its pathway is carotenoid biosynthesis; spirilloxanthin biosynthesis. Functionally, involved in the biosynthesis of the carotenoids spheroidene and spirilloxanthin. Catalyzes the introduction of one keto group at the C-2 position of spheroidene and two keto groups at the C-2 and C-2' positions of spirilloxanthin. The sequence is that of Spheroidene monooxygenase from Rubrivivax gelatinosus (Rhodocyclus gelatinosus).